The chain runs to 662 residues: uncharacterized protein (662 aa).

This is an uncharacterized protein from Ictalurid herpesvirus 1 (strain Auburn) (IcHV-1).